Consider the following 268-residue polypeptide: Hydroxyethylthiazole kinase (268 aa).

Met45 contributes to the substrate binding site. ATP contacts are provided by Arg121 and Thr167. Gly194 serves as a coordination point for substrate.

The protein belongs to the Thz kinase family. Mg(2+) is required as a cofactor.

It carries out the reaction 5-(2-hydroxyethyl)-4-methylthiazole + ATP = 4-methyl-5-(2-phosphooxyethyl)-thiazole + ADP + H(+). Its pathway is cofactor biosynthesis; thiamine diphosphate biosynthesis; 4-methyl-5-(2-phosphoethyl)-thiazole from 5-(2-hydroxyethyl)-4-methylthiazole: step 1/1. Catalyzes the phosphorylation of the hydroxyl group of 4-methyl-5-beta-hydroxyethylthiazole (THZ). The polypeptide is Hydroxyethylthiazole kinase (Bacillus anthracis (strain A0248)).